Here is a 202-residue protein sequence, read N- to C-terminus: MVPQGWSLAWVSVLYVSVIPSLHIINNENSVFIGTHSETELRHWLIFVKMAQRSGTAWWRMASVPINAYFERDIAFLFNPRCVIETALGSKILCRYNKNIGVVFVDNDTTCNVSFPSGVQLQLLNQSVMESIRTKTYVVDYARKTTERGDCFISVAFCRKERRRFLPRYERFVYYCISVYLFAVAVFCSCWFALDPLFNMWA.

Transmembrane regions (helical) follow at residues 5–25 (GWSL…LHII) and 172–192 (FVYY…SCWF).

It localises to the host membrane. This chain is Protein U22 (U22), found in Human herpesvirus 6B (strain Z29) (HHV-6 variant B).